Consider the following 141-residue polypeptide: Large ribosomal subunit protein uL11 (141 aa).

Belongs to the universal ribosomal protein uL11 family. Part of the ribosomal stalk of the 50S ribosomal subunit. Interacts with L10 and the large rRNA to form the base of the stalk. L10 forms an elongated spine to which L12 dimers bind in a sequential fashion forming a multimeric L10(L12)X complex. One or more lysine residues are methylated.

Its function is as follows. Forms part of the ribosomal stalk which helps the ribosome interact with GTP-bound translation factors. In Lactobacillus delbrueckii subsp. bulgaricus (strain ATCC 11842 / DSM 20081 / BCRC 10696 / JCM 1002 / NBRC 13953 / NCIMB 11778 / NCTC 12712 / WDCM 00102 / Lb 14), this protein is Large ribosomal subunit protein uL11.